Here is a 154-residue protein sequence, read N- to C-terminus: Large ribosomal subunit protein uL30 (154 aa).

Belongs to the universal ribosomal protein uL30 family. As to quaternary structure, part of the 50S ribosomal subunit.

This Methanoregula boonei (strain DSM 21154 / JCM 14090 / 6A8) protein is Large ribosomal subunit protein uL30.